Here is a 270-residue protein sequence, read N- to C-terminus: Putative pyruvate, phosphate dikinase regulatory protein (270 aa).

151 to 158 is an ADP binding site; it reads GVSRTSKT.

The protein belongs to the pyruvate, phosphate/water dikinase regulatory protein family. PDRP subfamily.

It carries out the reaction N(tele)-phospho-L-histidyl/L-threonyl-[pyruvate, phosphate dikinase] + ADP = N(tele)-phospho-L-histidyl/O-phospho-L-threonyl-[pyruvate, phosphate dikinase] + AMP + H(+). It catalyses the reaction N(tele)-phospho-L-histidyl/O-phospho-L-threonyl-[pyruvate, phosphate dikinase] + phosphate + H(+) = N(tele)-phospho-L-histidyl/L-threonyl-[pyruvate, phosphate dikinase] + diphosphate. Functionally, bifunctional serine/threonine kinase and phosphorylase involved in the regulation of the pyruvate, phosphate dikinase (PPDK) by catalyzing its phosphorylation/dephosphorylation. This chain is Putative pyruvate, phosphate dikinase regulatory protein, found in Ligilactobacillus salivarius (strain UCC118) (Lactobacillus salivarius).